The chain runs to 639 residues: ATP-dependent rRNA helicase spb4 (639 aa).

The short motif at 14–42 (WDAVTPPLSEWVLEAMSSMGFARMTPVQA) is the Q motif element. One can recognise a Helicase ATP-binding domain in the interval 45-249 (IPLFMAHKDV…RVGLRNPVKI (205 aa)). 58-65 (AVTGSGKT) is an ATP binding site. The short motif at 197 to 200 (DEAD) is the DEAD box element. Residues 283–437 (ALKNILSSVQ…SISFSDADAT (155 aa)) form the Helicase C-terminal domain. Disordered stretches follow at residues 531-601 (RKEL…ETKE) and 620-639 (AAKA…KGFD). Residues 561–624 (QNAENKNKKL…RFRQAAAKAE (64 aa)) are a coiled coil. A compositionally biased stretch (basic and acidic residues) spans 577–601 (KLKQEKTKWENMTEEERQKARETKE).

This sequence belongs to the DEAD box helicase family. DDX55/SPB4 subfamily. As to quaternary structure, component of pre-60S ribosomal complexes.

It localises to the nucleus. It is found in the nucleolus. The catalysed reaction is ATP + H2O = ADP + phosphate + H(+). In terms of biological role, ATP-binding RNA helicase involved in the biogenesis of 60S ribosomal subunits. Binds 90S pre-ribosomal particles and dissociates from pre-60S ribosomal particles after processing of 27SB pre-rRNA. Required for the normal formation of 18S rRNA through the processing of pre-rRNAs at sites A0, A1 and A2, and the normal formation of 25S and 5.8S rRNAs through the processing of pre-rRNAs at sites C1 and C2. In Aspergillus clavatus (strain ATCC 1007 / CBS 513.65 / DSM 816 / NCTC 3887 / NRRL 1 / QM 1276 / 107), this protein is ATP-dependent rRNA helicase spb4.